Consider the following 381-residue polypeptide: NF-kappa-B inhibitor-like protein 1 (381 aa).

The interval 1 to 32 is disordered; sequence MSNPSPQAPEEEASTSVCRPQSSMASVSRRHR. A compositionally biased stretch (polar residues) spans 14–26; the sequence is STSVCRPQSSMAS. ANK repeat units lie at residues 64 to 93 and 97 to 133; these read GQPP…DPAH and HGDT…IKNK. Disordered regions lie at residues 129–166, 186–242, and 257–294; these read GIKN…REWR, DDAS…QEEE, and LCES…RGSL. Ser-150 carries the phosphoserine modification. Residues 150-159 show a composition bias toward acidic residues; that stretch reads SAEEEEDEEV. Basic and acidic residues-rich tracts occupy residues 204–228 and 257–270; these read RLAR…RPPR and LCES…EAQG.

Interacts with CACTIN (via N-terminal domain); the interaction occurs in a pro-inflammatory-independent manner.

It localises to the nucleus. Its function is as follows. Involved in the regulation of innate immune response. Acts as negative regulator of Toll-like receptor and interferon-regulatory factor (IRF) signaling pathways. Contributes to the negative regulation of transcriptional activation of NF-kappa-B target genes in response to endogenous pro-inflammatory stimuli. The polypeptide is NF-kappa-B inhibitor-like protein 1 (Nfkbil1) (Rattus norvegicus (Rat)).